The sequence spans 109 residues: UPF0449 protein C19orf25 homolog (109 aa).

A Phosphotyrosine modification is found at Y63.

This sequence belongs to the UPF0449 family.

This Rattus norvegicus (Rat) protein is UPF0449 protein C19orf25 homolog.